The sequence spans 242 residues: Lactate utilization protein A 2 (242 aa).

It belongs to the LutA/YkgE family.

In terms of biological role, is involved in L-lactate degradation and allows cells to grow with lactate as the sole carbon source. The chain is Lactate utilization protein A 2 from Bacillus cereus (strain ZK / E33L).